The following is a 178-amino-acid chain: VLPEVYDQDGEPLRIGERYIIKNPLLGGGAVYLYNIGNLQCPNAVLQHMSIPQFLGKGTPVVFVRKSESDYGDVVRVMTGVYIKFFFKTSKLCVDETVWKVNDEELVVTGGNVGNENDIFKIKKTDLVIRGMKNVYKLLHCRSHLGCKNIGGNFKNGYPRLAAVDDDKDFIPFVFIKA.

2 disulfides stabilise this stretch: C41-C93 and C141-C147.

It belongs to the protease inhibitor I3 (leguminous Kunitz-type inhibitor) family.

It is found in the vacuole. Functionally, inhibitor of cysteine proteases. May protect the plant by inhibiting proteases of invading organisms. In Solanum tuberosum (Potato), this protein is Cysteine protease inhibitor 7.